An 88-amino-acid chain; its full sequence is Small ribosomal subunit protein bS20 (88 aa).

The protein belongs to the bacterial ribosomal protein bS20 family.

Binds directly to 16S ribosomal RNA. This chain is Small ribosomal subunit protein bS20, found in Bartonella quintana (strain Toulouse) (Rochalimaea quintana).